Consider the following 175-residue polypeptide: B9 domain-containing protein 2 (175 aa).

Positions 2–118 constitute a C2 B9-type domain; sequence AELHIIGQII…QCVTWRPLGS (117 aa).

It belongs to the B9D family. In terms of assembly, part of the tectonic-like complex (also named B9 complex).

The protein localises to the cytoplasm. It localises to the cytoskeleton. It is found in the cilium basal body. The protein resides in the cilium axoneme. In terms of biological role, component of the tectonic-like complex, a complex localized at the transition zone of primary cilia and acting as a barrier that prevents diffusion of transmembrane proteins between the cilia and plasma membranes. This chain is B9 domain-containing protein 2 (b9d2), found in Danio rerio (Zebrafish).